Reading from the N-terminus, the 347-residue chain is NADH-ubiquinone oxidoreductase chain 2 (347 aa).

The next 11 membrane-spanning stretches (helical) occupy residues 1-21 (MNPM…SIVL), 25-45 (HWFL…PVLM), 68-88 (MILV…TIMI), 96-116 (MLIT…FWVP), 122-142 (VSLS…LSLL), 145-165 (IFPS…IMIG), 178-198 (IMAY…IYNP), 201-221 (SLLN…LLII), 239-259 (IVVS…PLTG), 274-294 (SSVM…FFYM), and 326-346 (MMSL…LITL).

It belongs to the complex I subunit 2 family. As to quaternary structure, core subunit of respiratory chain NADH dehydrogenase (Complex I) which is composed of 45 different subunits. Interacts with TMEM242.

It localises to the mitochondrion inner membrane. It carries out the reaction a ubiquinone + NADH + 5 H(+)(in) = a ubiquinol + NAD(+) + 4 H(+)(out). Its function is as follows. Core subunit of the mitochondrial membrane respiratory chain NADH dehydrogenase (Complex I) which catalyzes electron transfer from NADH through the respiratory chain, using ubiquinone as an electron acceptor. Essential for the catalytic activity and assembly of complex I. This chain is NADH-ubiquinone oxidoreductase chain 2, found in Sylvisorex lunaris (Moon forest shrew).